Consider the following 130-residue polypeptide: Large-conductance mechanosensitive channel (130 aa).

Residues 1–14 lie on the Cytoplasmic side of the membrane; sequence MWNEFKAFAMRGNI. The helical transmembrane segment at 15-43 threads the bilayer; it reads VDLAIGVVIGGAFGKIVTSLVNDIIMPLV. Residues 44–65 lie on the Extracellular side of the membrane; sequence GLLLGGLDFSGLSFTFGDAVVK. The chain crosses the membrane as a helical span at residues 66 to 85; it reads YGSFIQTIVNFLIISFSIFI. The Cytoplasmic segment spans residues 86 to 130; sequence VIRTLNGLRRKKEAEEEAAEEAVDAQEELLKEIRDLLKQQAKSPE.

Belongs to the MscL family. Homopentamer.

Its subcellular location is the cell membrane. In terms of biological role, channel that opens in response to stretch forces in the membrane lipid bilayer. Forms a nonselective ion channel with a conductance of about 4 nanosiemens. May participate in the regulation of osmotic pressure changes within the cell. The protein is Large-conductance mechanosensitive channel of Bacillus subtilis (strain 168).